Here is a 262-residue protein sequence, read N- to C-terminus: Type III pantothenate kinase (262 aa).

D6–V13 provides a ligand contact to ATP. Substrate contacts are provided by residues Y100 and G107–R110. Residue D109 is the Proton acceptor of the active site. D129 is a K(+) binding site. Position 132 (T132) interacts with ATP. T184 is a binding site for substrate.

It belongs to the type III pantothenate kinase family. As to quaternary structure, homodimer. The cofactor is NH4(+). It depends on K(+) as a cofactor.

The protein resides in the cytoplasm. It carries out the reaction (R)-pantothenate + ATP = (R)-4'-phosphopantothenate + ADP + H(+). It functions in the pathway cofactor biosynthesis; coenzyme A biosynthesis; CoA from (R)-pantothenate: step 1/5. Catalyzes the phosphorylation of pantothenate (Pan), the first step in CoA biosynthesis. The protein is Type III pantothenate kinase of Bacillus cereus (strain G9842).